The following is a 565-amino-acid chain: Urease subunit beta (565 aa).

The Urease domain maps to 130 to 565; sequence GGIDTHIHFI…LALARKYFMI (436 aa). Ni(2+)-binding residues include His-135, His-137, and Lys-218. Lys-218 bears the N6-carboxylysine mark. His-220 is a binding site for substrate. His-247 and His-273 together coordinate Ni(2+). The active-site Proton donor is the His-321. Position 361 (Asp-361) interacts with Ni(2+).

It belongs to the metallo-dependent hydrolases superfamily. Urease alpha subunit family. As to quaternary structure, heterohexamer of 3 UreA (alpha) and 3 UreB (beta) subunits. The cofactor is Ni cation. Carboxylation allows a single lysine to coordinate two nickel ions.

It localises to the cytoplasm. It catalyses the reaction urea + 2 H2O + H(+) = hydrogencarbonate + 2 NH4(+). Its pathway is nitrogen metabolism; urea degradation; CO(2) and NH(3) from urea (urease route): step 1/1. This is Urease subunit beta from Campylobacter lari.